Here is a 342-residue protein sequence, read N- to C-terminus: DNA primase small subunit PriS (342 aa).

Catalysis depends on residues Asp-97, Asp-99, and Asp-276.

It belongs to the eukaryotic-type primase small subunit family. Heterodimer of a small subunit (PriS) and a large subunit (PriL). Mg(2+) serves as cofactor. Requires Mn(2+) as cofactor.

Catalytic subunit of DNA primase, an RNA polymerase that catalyzes the synthesis of short RNA molecules used as primers for DNA polymerase during DNA replication. The small subunit contains the primase catalytic core and has DNA synthesis activity on its own. Binding to the large subunit stabilizes and modulates the activity, increasing the rate of DNA synthesis while decreasing the length of the DNA fragments, and conferring RNA synthesis capability. The DNA polymerase activity may enable DNA primase to also catalyze primer extension after primer synthesis. May also play a role in DNA repair. This Thermococcus sibiricus (strain DSM 12597 / MM 739) protein is DNA primase small subunit PriS.